The sequence spans 133 residues: Hydrogenase maturation factor HypA (133 aa).

Histidine 2 provides a ligand contact to Ni(2+). 4 residues coordinate Zn(2+): cysteine 73, cysteine 75, cysteine 105, and cysteine 108.

The protein belongs to the HypA/HybF family.

Involved in the maturation of [NiFe] hydrogenases. Required for nickel insertion into the metal center of the hydrogenase. In Methanosarcina barkeri (strain Fusaro / DSM 804), this protein is Hydrogenase maturation factor HypA.